The following is a 293-amino-acid chain: uncharacterized protein (293 aa).

Catalysis depends on charge relay system residues threonine 43 and tyrosine 105. The active-site Proton donor is the tyrosine 131. Catalysis depends on lysine 159, which acts as the Schiff-base intermediate with substrate.

The protein belongs to the DapA family. As to quaternary structure, homotetramer.

It localises to the cytoplasm. This is an uncharacterized protein from Thermococcus onnurineus (strain NA1).